Here is a 576-residue protein sequence, read N- to C-terminus: Proline--tRNA ligase (576 aa).

This sequence belongs to the class-II aminoacyl-tRNA synthetase family. ProS type 1 subfamily. As to quaternary structure, homodimer.

It is found in the cytoplasm. The enzyme catalyses tRNA(Pro) + L-proline + ATP = L-prolyl-tRNA(Pro) + AMP + diphosphate. In terms of biological role, catalyzes the attachment of proline to tRNA(Pro) in a two-step reaction: proline is first activated by ATP to form Pro-AMP and then transferred to the acceptor end of tRNA(Pro). As ProRS can inadvertently accommodate and process non-cognate amino acids such as alanine and cysteine, to avoid such errors it has two additional distinct editing activities against alanine. One activity is designated as 'pretransfer' editing and involves the tRNA(Pro)-independent hydrolysis of activated Ala-AMP. The other activity is designated 'posttransfer' editing and involves deacylation of mischarged Ala-tRNA(Pro). The misacylated Cys-tRNA(Pro) is not edited by ProRS. In Bordetella pertussis (strain Tohama I / ATCC BAA-589 / NCTC 13251), this protein is Proline--tRNA ligase.